Reading from the N-terminus, the 436-residue chain is Adenosylmethionine-8-amino-7-oxononanoate aminotransferase (436 aa).

Trp-66 provides a ligand contact to substrate. Position 126-127 (126-127 (GS)) interacts with pyridoxal 5'-phosphate. A substrate-binding site is contributed by Tyr-159. A pyridoxal 5'-phosphate-binding site is contributed by Asp-256. Positions 285 and 318 each coordinate substrate. The residue at position 285 (Lys-285) is an N6-(pyridoxal phosphate)lysine. 319 to 320 (PT) is a pyridoxal 5'-phosphate binding site. Arg-402 is a binding site for substrate.

The protein belongs to the class-III pyridoxal-phosphate-dependent aminotransferase family. BioA subfamily. In terms of assembly, homodimer. Requires pyridoxal 5'-phosphate as cofactor.

The protein resides in the cytoplasm. It catalyses the reaction (8S)-8-amino-7-oxononanoate + S-adenosyl-L-methionine = S-adenosyl-4-methylsulfanyl-2-oxobutanoate + (7R,8S)-7,8-diammoniononanoate. The protein operates within cofactor biosynthesis; biotin biosynthesis; 7,8-diaminononanoate from 8-amino-7-oxononanoate (SAM route): step 1/1. Functionally, catalyzes the transfer of the alpha-amino group from S-adenosyl-L-methionine (SAM) to 7-keto-8-aminopelargonic acid (KAPA) to form 7,8-diaminopelargonic acid (DAPA). It is the only aminotransferase known to utilize SAM as an amino donor. This Mycobacterium leprae (strain TN) protein is Adenosylmethionine-8-amino-7-oxononanoate aminotransferase.